The following is a 492-amino-acid chain: MEETPRSVGEASTTNFVAARPSAKTDDAVTMRGCGFANLALVGIDKEELRGRLAMPEYLRIAMRDCIKRKDSTEISDHLLLPGGAAADMAPHAPMVVFINPKSGGRHGPVLKERLQQLMTEEQVFDLTEVKPHEFVRYGLGCLDTLAAKGDECARECREKIRIMVAGGDGTVGWVLGCLGELHKDGKSHIPPVGVIPLGTGNDLSRSFSWGGSFPFAWRSAMKRTLHRATLGSIARLDSWKIVVSMPSGEVVDPPYSLKPTIEETALDQALDADGDVPPKAKSYEGVFYNYFSIGMDAQVAYGFHHLRNEKPYLAQGPVTNKIIYSSYSCTQGWFCTPCVNNPALRGLRNIMKIHIKKANCSEWEEIHVPKSVRSIVVLNLYNYGSGRHPWGNLRPKYLEKRGFVEAHCDDGLIEIFGLKQGWHASFVMAEIISAKHIAQAAAIRFELRGGDWKNAFLQMDGEPWKQPMKSDYSTFVEIKKVPFQSLMINGE.

The 159-residue stretch at 90-248 folds into the DAGKc domain; sequence APHAPMVVFI…SWKIVVSMPS (159 aa).

It belongs to the eukaryotic diacylglycerol kinase family. In terms of assembly, monomer. In terms of tissue distribution, highly expressed in flowers, and at low levels in roots, stems and leaves.

It catalyses the reaction a 1,2-diacyl-sn-glycerol + ATP = a 1,2-diacyl-sn-glycero-3-phosphate + ADP + H(+). Functionally, phosphorylates the second messenger diacylglycerol (DAG) to generate phosphatidic acid (PA), another important signaling molecule. PA is required for plant development and responses to abiotic stress and pathogen attack. May be involved in the accumulation of PA during cold stress xhibits high specificity for 1,2-dioleoyl-sn-glycerol (1,2-DOG), 1-palmitoyl, 2-oleoyl-sn-glycerol (1,2 POG), 1-stearoyl, 2-linoleoyl-sn-glycerol (1,2-SLG) and 1-oleoyl, 2-palmitoyl-sn-glycerol (1,2-OPG). In Arabidopsis thaliana (Mouse-ear cress), this protein is Diacylglycerol kinase 7 (DGK7).